A 267-amino-acid polypeptide reads, in one-letter code: Undecaprenyl-diphosphatase (267 aa).

A run of 8 helical transmembrane segments spans residues 1-21, 39-59, 83-103, 111-131, 144-164, 189-209, 218-238, and 245-265; these read MSYF…FLPI, QGLA…VIYF, AKLA…GLLM, LRSA…LWWV, TGWK…IPGT, FLMS…KLVT, FLLT…HFFL, and GMTP…AFLL.

Belongs to the UppP family.

It localises to the cell inner membrane. The catalysed reaction is di-trans,octa-cis-undecaprenyl diphosphate + H2O = di-trans,octa-cis-undecaprenyl phosphate + phosphate + H(+). Catalyzes the dephosphorylation of undecaprenyl diphosphate (UPP). Confers resistance to bacitracin. The chain is Undecaprenyl-diphosphatase from Vibrio parahaemolyticus serotype O3:K6 (strain RIMD 2210633).